A 218-amino-acid polypeptide reads, in one-letter code: Histone chaperone ASF1B (218 aa).

Belongs to the ASF1 family. In terms of assembly, interacts with histone H3 and histone H4. Interacts strongly with the N-terminus of TOUSLED. Phosphorylated in vitro by TOUSLED.

The protein localises to the nucleus. Its function is as follows. Histone chaperone that facilitates histone deposition and histone exchange and removal during nucleosome assembly and disassembly. This is Histone chaperone ASF1B (ASF1B) from Arabidopsis thaliana (Mouse-ear cress).